Here is a 300-residue protein sequence, read N- to C-terminus: D-alanine--D-alanine ligase (300 aa).

The ATP-grasp domain occupies 99-293 (KKILKYANIN…FAELLNSIVK (195 aa)). Residue 126–181 (IEKIGYPVFVKPNSGGSSVATNLVKDKEGIKEAVELALKYDKEVMIENYTKGEEIT) participates in ATP binding. Positions 248, 260, and 262 each coordinate Mg(2+).

Belongs to the D-alanine--D-alanine ligase family. The cofactor is Mg(2+). Mn(2+) serves as cofactor.

It is found in the cytoplasm. The catalysed reaction is 2 D-alanine + ATP = D-alanyl-D-alanine + ADP + phosphate + H(+). The protein operates within cell wall biogenesis; peptidoglycan biosynthesis. In terms of biological role, cell wall formation. The polypeptide is D-alanine--D-alanine ligase (Clostridium botulinum (strain ATCC 19397 / Type A)).